The sequence spans 494 residues: Alpha-amylase-related protein (494 aa).

An N-terminal signal peptide occupies residues 1–20; it reads MFKFAAAVILCLVAASSTLA. A Pyrrolidone carboxylic acid modification is found at glutamine 21. A disulfide bridge links cysteine 48 with cysteine 104. Asparagine 118, glutamine 169, and aspartate 178 together coordinate Ca(2+). An intrachain disulfide couples cysteine 157 to cysteine 171. A chloride-binding site is contributed by arginine 206. Aspartate 208 serves as the catalytic Nucleophile. Histidine 212 provides a ligand contact to Ca(2+). Residue glutamate 245 is the Proton donor of the active site. Residues asparagine 308 and arginine 343 each coordinate chloride. 3 cysteine pairs are disulfide-bonded: cysteine 376–cysteine 382, cysteine 418–cysteine 441, and cysteine 448–cysteine 460.

Belongs to the glycosyl hydrolase 13 family. Monomer. It depends on Ca(2+) as a cofactor. Chloride serves as cofactor.

It is found in the secreted. The catalysed reaction is Endohydrolysis of (1-&gt;4)-alpha-D-glucosidic linkages in polysaccharides containing three or more (1-&gt;4)-alpha-linked D-glucose units.. The sequence is that of Alpha-amylase-related protein (Amyrel) from Drosophila atripex (Fruit fly).